The following is a 315-amino-acid chain: tRNA uridine(34) hydroxylase (315 aa).

The 102-residue stretch at 122 to 223 folds into the Rhodanese domain; that stretch reads SDPDVLVIDT…YLEQIPQPES (102 aa). The active-site Cysteine persulfide intermediate is C183.

Belongs to the TrhO family.

It carries out the reaction uridine(34) in tRNA + AH2 + O2 = 5-hydroxyuridine(34) in tRNA + A + H2O. Its function is as follows. Catalyzes oxygen-dependent 5-hydroxyuridine (ho5U) modification at position 34 in tRNAs. This Caulobacter vibrioides (strain ATCC 19089 / CIP 103742 / CB 15) (Caulobacter crescentus) protein is tRNA uridine(34) hydroxylase.